The sequence spans 463 residues: FAD-dependent monooxygenase str9 (463 aa).

FAD is bound by residues Glu-37, Gly-50, and Arg-114. Residue Arg-200 is part of the active site. Residue Asp-334 participates in FAD binding.

This sequence belongs to the paxM FAD-dependent monooxygenase family.

It participates in mycotoxin biosynthesis. Its function is as follows. FAD-dependent monooxygenase; part of the gene cluster that mediates the biosynthesis of strobilurin A, an antifungal polyketide that contains a key beta-methoxyacrylate toxophore that targets the complex III of the mitochondrial electron transport chain. Strobilurin biosynthesis begins with construction of benzoyl CoA by step-wise elimination of ammonia from phenylalanine by the phenylalanine ammonia-lyase str11, oxygenation by str8 and retro-Claisen reaction to form benzoic acid, which is activated to its CoA thiolester benzoyl CoA by the dedicated CoA ligase str10. Benzoyl CoA forms the starter unit for the highly reducing polyketide synthase stpks1 that produces the polyketide prestrobilutin A. The FAD-dependent oxygenase str9 then catalyzes the key oxidative rearrangement responsible for the creation of the beta-methoxyacrylate toxophore. Str9 performs epoxidation of the 2,3 olefin of prestrobilutin A, followed by Meinwald rearrangement to furnish the aldehyde intermediate. Rapid enolization of the aldehyde intermediate would give the beta-methoxyacrylate skeleton and methylations catalyzed by str2 and str3 complete the synthesis and lead to the production of strobilurin A. The short-chain dehydrogenase stl2 and the dehydrogenase str4 play a role in the shunt pathway leading to the production of bolineol. The cluster encodes no obvious halogenase gene that could be involved in production of strobilurin B, nor any obvious dimethylallyl-transferase that could be involved in the production of strobilurin G. It is possible that unknown proteins encoded in, or near, the cluster (such as str1 or stl1) may form new classes of halogenases or dimethylally-transferases, or that the responsible genes are located elsewhere on the genome. Similarly, proteins encoded by str5/str6 hydrolases appear to have no chemical role in the biosynthesis of strobilurin A. Finally, no obvious self-resistance gene is found within the cluster. This chain is FAD-dependent monooxygenase str9, found in Strobilurus tenacellus.